Here is a 390-residue protein sequence, read N- to C-terminus: Cystathionine beta-lyase MetC (390 aa).

Position 200 is an N6-(pyridoxal phosphate)lysine (lysine 200).

Belongs to the trans-sulfuration enzymes family. Homotetramer. The cofactor is pyridoxal 5'-phosphate.

It is found in the cytoplasm. It carries out the reaction L,L-cystathionine + H2O = L-homocysteine + pyruvate + NH4(+). The enzyme catalyses an S-substituted L-cysteine + H2O = a thiol + pyruvate + NH4(+). It participates in amino-acid biosynthesis; L-methionine biosynthesis via de novo pathway; L-homocysteine from L-cystathionine: step 1/1. Catalyzes the transformation of cystathionine into homocysteine. Also exhibits cysteine desulfhydrase activity in vitro, producing sulfide from cysteine. In Bacillus subtilis (strain 168), this protein is Cystathionine beta-lyase MetC (metC).